We begin with the raw amino-acid sequence, 455 residues long: tRNA modification GTPase MnmE (455 aa).

Positions 24, 81, and 120 each coordinate (6S)-5-formyl-5,6,7,8-tetrahydrofolate. The TrmE-type G domain occupies 216–378 (GMTVVIAGRP…LREHLKACMG (163 aa)). A K(+)-binding site is contributed by Asn226. Residues 226 to 231 (NAGKSS), 245 to 251 (TDIAGTT), 270 to 273 (DTAG), 335 to 338 (NKAD), and 359 to 361 (SAR) each bind GTP. Ser230 provides a ligand contact to Mg(2+). Residues Thr245, Ile247, and Thr250 each contribute to the K(+) site. Thr251 serves as a coordination point for Mg(2+). Position 455 (Lys455) interacts with (6S)-5-formyl-5,6,7,8-tetrahydrofolate.

It belongs to the TRAFAC class TrmE-Era-EngA-EngB-Septin-like GTPase superfamily. TrmE GTPase family. Homodimer. Heterotetramer of two MnmE and two MnmG subunits. Requires K(+) as cofactor.

The protein resides in the cytoplasm. Its function is as follows. Exhibits a very high intrinsic GTPase hydrolysis rate. Involved in the addition of a carboxymethylaminomethyl (cmnm) group at the wobble position (U34) of certain tRNAs, forming tRNA-cmnm(5)s(2)U34. The sequence is that of tRNA modification GTPase MnmE from Pseudomonas aeruginosa (strain ATCC 15692 / DSM 22644 / CIP 104116 / JCM 14847 / LMG 12228 / 1C / PRS 101 / PAO1).